The primary structure comprises 114 residues: Ribosome-binding factor A (114 aa).

It belongs to the RbfA family. Monomer. Binds 30S ribosomal subunits, but not 50S ribosomal subunits or 70S ribosomes.

It localises to the cytoplasm. In terms of biological role, one of several proteins that assist in the late maturation steps of the functional core of the 30S ribosomal subunit. Associates with free 30S ribosomal subunits (but not with 30S subunits that are part of 70S ribosomes or polysomes). Required for efficient processing of 16S rRNA. May interact with the 5'-terminal helix region of 16S rRNA. The protein is Ribosome-binding factor A of Listeria welshimeri serovar 6b (strain ATCC 35897 / DSM 20650 / CCUG 15529 / CIP 8149 / NCTC 11857 / SLCC 5334 / V8).